The primary structure comprises 644 residues: Macrolide export ATP-binding/permease protein MacB (644 aa).

The 239-residue stretch at 6-244 (LELDGVWRRF…SQATEAQPDG (239 aa)) folds into the ABC transporter domain. 42-49 (GASGSGKS) is a binding site for ATP. Transmembrane regions (helical) follow at residues 271–291 (ALTMLGIVIGIASVVSVIAIG), 415–435 (EAVGRVILVGMVPATVIGVVA), 517–537 (LSLLLALVAVISLVVGGIGVM), 574–594 (LVCLVGGAIGVALSYGVSFVF), and 609–629 (VIALAVACSSLIGVLFGFLPA).

It belongs to the ABC transporter superfamily. Macrolide exporter (TC 3.A.1.122) family. As to quaternary structure, homodimer.

Its subcellular location is the cell inner membrane. Its function is as follows. Non-canonical ABC transporter that contains transmembrane domains (TMD), which form a pore in the inner membrane, and an ATP-binding domain (NBD), which is responsible for energy generation. Confers resistance against macrolides. This is Macrolide export ATP-binding/permease protein MacB from Chromobacterium violaceum (strain ATCC 12472 / DSM 30191 / JCM 1249 / CCUG 213 / NBRC 12614 / NCIMB 9131 / NCTC 9757 / MK).